Reading from the N-terminus, the 299-residue chain is Triplex capsid protein 1 (299 aa).

This sequence belongs to the herpesviridae TRX1 protein family. Interacts with TRX2, MCP and capsid vertex component 2/CVC2.

It is found in the virion. The protein localises to the host nucleus. Functionally, structural component of the T=16 icosahedral capsid. The capsid is composed of pentamers and hexamers of major capsid protein/MCP, which are linked together by heterotrimers called triplexes. These triplexes are formed by a single molecule of triplex protein 1/TRX1 and two copies of triplex protein 2/TRX2. Additionally, TRX1 is required for efficient transport of TRX2 to the nucleus, which is the site of capsid assembly. The sequence is that of Triplex capsid protein 1 from Homo sapiens (Human).